The primary structure comprises 85 residues: MCVSRLALLLGLLLCVGAQLSFAQHWSHGWYPGGKRELDSFGTSEISEEIKLCEAGECSYLRPQRRSILRNILLDALARELQKRK.

A signal peptide spans 1–23 (MCVSRLALLLGLLLCVGAQLSFA). Pyrrolidone carboxylic acid is present on Gln-24. Gly-33 is subject to Glycine amide.

The protein belongs to the GnRH family. Expressed in only one cell group in the mesencephalon.

It is found in the secreted. In terms of biological role, stimulates the secretion of gonadotropins. The polypeptide is Progonadoliberin-2 (gnrh2) (Haplochromis burtoni (Burton's mouthbrooder)).